A 183-amino-acid polypeptide reads, in one-letter code: Peptidyl-tRNA hydrolase (183 aa).

Tyrosine 15 is a binding site for tRNA. The Proton acceptor role is filled by histidine 20. TRNA contacts are provided by tyrosine 67 and asparagine 69.

It belongs to the PTH family. As to quaternary structure, monomer.

The protein localises to the cytoplasm. The catalysed reaction is an N-acyl-L-alpha-aminoacyl-tRNA + H2O = an N-acyl-L-amino acid + a tRNA + H(+). In terms of biological role, hydrolyzes ribosome-free peptidyl-tRNAs (with 1 or more amino acids incorporated), which drop off the ribosome during protein synthesis, or as a result of ribosome stalling. Functionally, catalyzes the release of premature peptidyl moieties from peptidyl-tRNA molecules trapped in stalled 50S ribosomal subunits, and thus maintains levels of free tRNAs and 50S ribosomes. This Chlamydia caviae (strain ATCC VR-813 / DSM 19441 / 03DC25 / GPIC) (Chlamydophila caviae) protein is Peptidyl-tRNA hydrolase.